The sequence spans 340 residues: MDQNRSPNGRDCREPPSPSSTARPGLVVIAGPTATGKSRQALLLAQRLGSPLLNADSRQVYREFDIGTAKPTPAERALWPHELIDFVDPRHTYTVAEFQQAAQARIAAAHRQGQTPILVGGTGLYIQSITAGLGIPAVPPQPQLRAQLETWPPEIRYAWLQQLDPVAAGQIHPHDEVRTLRALEIIYTTGKPASYLRQAHPPDYPILLLGLHCPMPRLEQRIARRTAEMLAAGWIEEVKTLRQRYGPDLPLLQTLGYAEIGAYLEGRIPAAELQPLIVRRTRQFAKRQMTWFRAMPGIQWLDCEAEDLPEQIWKRVTAWMAAQTSAGTTPAVAARPPADP.

Residues 1 to 25 are disordered; sequence MDQNRSPNGRDCREPPSPSSTARPG. Residue 31–38 participates in ATP binding; the sequence is GPTATGKS. 33–38 serves as a coordination point for substrate; it reads TATGKS. Positions 56–59 are interaction with substrate tRNA; that stretch reads DSRQ.

The protein belongs to the IPP transferase family. In terms of assembly, monomer. Mg(2+) is required as a cofactor.

The catalysed reaction is adenosine(37) in tRNA + dimethylallyl diphosphate = N(6)-dimethylallyladenosine(37) in tRNA + diphosphate. Catalyzes the transfer of a dimethylallyl group onto the adenine at position 37 in tRNAs that read codons beginning with uridine, leading to the formation of N6-(dimethylallyl)adenosine (i(6)A). The chain is tRNA dimethylallyltransferase from Synechococcus sp. (strain JA-3-3Ab) (Cyanobacteria bacterium Yellowstone A-Prime).